The chain runs to 246 residues: Bromelain inhibitor (246 aa).

An N-terminal signal peptide occupies residues 1-19 (MNMLLLFLHEVINGERVTL). 5 disulfide bridges follow: cysteine 22-cysteine 42, cysteine 25-cysteine 74, cysteine 27-cysteine 40, cysteine 49-cysteine 56, and cysteine 53-cysteine 65. Positions 31–35 (TSSSD) are excised as a propeptide. Propeptides lie at residues 77-95 (PVSSSEAKQKMIKGERVTL) and 107-111 (TSSSD). Disulfide bonds link cysteine 98–cysteine 118, cysteine 101–cysteine 150, cysteine 103–cysteine 116, cysteine 125–cysteine 132, and cysteine 129–cysteine 141. 2 propeptides span residues 153–171 (PVSSLEAKQNMIKEERVTL) and 183–187 (TSSSD). Intrachain disulfides connect cysteine 174–cysteine 194, cysteine 177–cysteine 226, cysteine 179–cysteine 192, cysteine 201–cysteine 208, and cysteine 205–cysteine 217. Residues 229–246 (PVSSWEARQKIKLLQGRE) constitute a propeptide that is removed on maturation.

This sequence belongs to the protease inhibitor I67 family. As to quaternary structure, each inhibitor is composed of two chains, designated A and B linked by three disulfide bonds.

Weak inhibitor of cysteine proteinases. The chain is Bromelain inhibitor from Ananas comosus (Pineapple).